Reading from the N-terminus, the 336-residue chain is Inositol 2-dehydrogenase (336 aa).

The protein belongs to the Gfo/Idh/MocA family. Homotetramer.

It catalyses the reaction myo-inositol + NAD(+) = scyllo-inosose + NADH + H(+). Functionally, involved in the oxidation of myo-inositol (MI) to 2-keto-myo-inositol (2KMI or 2-inosose). This chain is Inositol 2-dehydrogenase, found in Agrobacterium fabrum (strain C58 / ATCC 33970) (Agrobacterium tumefaciens (strain C58)).